A 224-amino-acid chain; its full sequence is Ribonuclease T (224 aa).

An Exonuclease domain is found at 20–194; the sequence is VVIDVETAGF…YDTERTAELF (175 aa). Mg(2+) contacts are provided by D23, E25, H181, and D186. Residue H181 is the Proton donor/acceptor of the active site.

This sequence belongs to the RNase T family. In terms of assembly, homodimer. Mg(2+) serves as cofactor.

In terms of biological role, trims short 3' overhangs of a variety of RNA species, leaving a one or two nucleotide 3' overhang. Responsible for the end-turnover of tRNA: specifically removes the terminal AMP residue from uncharged tRNA (tRNA-C-C-A). Also appears to be involved in tRNA biosynthesis. In Enterobacter sp. (strain 638), this protein is Ribonuclease T.